Here is a 309-residue protein sequence, read N- to C-terminus: ESX-3 secretion system protein EccE3 (309 aa).

The next 2 helical transmembrane spans lie at 5–25 and 29–49; these read IALASLFVVAAVLAQPWQTTT and VLGVSIAAVIVLLAWWKGMFL.

It belongs to the EccE family. As to quaternary structure, part of the ESX-3 / type VII secretion system (T7SS), which is composed of cytosolic and membrane components. The ESX-3 membrane complex is composed of EccB3, EccC3, EccD3 and EccE3.

It localises to the cell inner membrane. Part of the ESX-3 specialized secretion system, which is required for siderophore-mediated iron acquisition and for the secretion of EsxH and EsxG. In Mycolicibacterium smegmatis (strain ATCC 700084 / mc(2)155) (Mycobacterium smegmatis), this protein is ESX-3 secretion system protein EccE3.